A 225-amino-acid chain; its full sequence is Thaumatin-like protein (225 aa).

The N-terminal stretch at 1–24 (MSTFKSLSLSALLFIAFLFTCARG) is a signal peptide. Disulfide bonds link C33/C224, C74/C84, C89/C95, C140/C213, C146/C196, C154/C164, C168/C177, and C178/C183.

Belongs to the thaumatin family. In terms of processing, N-glycosylated.

The protein resides in the secreted. Its function is as follows. Has antifungal activity against B.cinerea, C.comatus, M.arachidicola, P.piricola, C.albicans and S.carlsbergensis. Inhibits HIV-1 reverse transcriptase. This chain is Thaumatin-like protein, found in Actinidia chinensis var. chinensis (Chinese soft-hair kiwi).